Consider the following 631-residue polypeptide: Phosphomethylpyrimidine synthase (631 aa).

Substrate contacts are provided by residues Asn-239, Met-268, Tyr-297, His-333, 353-355, 394-397, and Glu-433; these read SRG and DGLR. His-437 lines the Zn(2+) pocket. Tyr-460 is a substrate binding site. His-501 is a binding site for Zn(2+). The [4Fe-4S] cluster site is built by Cys-581, Cys-584, and Cys-589.

It belongs to the ThiC family. In terms of assembly, homodimer. The cofactor is [4Fe-4S] cluster.

It catalyses the reaction 5-amino-1-(5-phospho-beta-D-ribosyl)imidazole + S-adenosyl-L-methionine = 4-amino-2-methyl-5-(phosphooxymethyl)pyrimidine + CO + 5'-deoxyadenosine + formate + L-methionine + 3 H(+). The protein operates within cofactor biosynthesis; thiamine diphosphate biosynthesis. Functionally, catalyzes the synthesis of the hydroxymethylpyrimidine phosphate (HMP-P) moiety of thiamine from aminoimidazole ribotide (AIR) in a radical S-adenosyl-L-methionine (SAM)-dependent reaction. This chain is Phosphomethylpyrimidine synthase, found in Klebsiella pneumoniae (strain 342).